The chain runs to 423 residues: Serine hydroxymethyltransferase (423 aa).

(6S)-5,6,7,8-tetrahydrofolate contacts are provided by residues Leu121 and 125-127; that span reads GHL. At Lys230 the chain carries N6-(pyridoxal phosphate)lysine. 355 to 357 contacts (6S)-5,6,7,8-tetrahydrofolate; that stretch reads SPF.

Belongs to the SHMT family. As to quaternary structure, homodimer. It depends on pyridoxal 5'-phosphate as a cofactor.

The protein resides in the cytoplasm. The enzyme catalyses (6R)-5,10-methylene-5,6,7,8-tetrahydrofolate + glycine + H2O = (6S)-5,6,7,8-tetrahydrofolate + L-serine. It participates in one-carbon metabolism; tetrahydrofolate interconversion. The protein operates within amino-acid biosynthesis; glycine biosynthesis; glycine from L-serine: step 1/1. Its function is as follows. Catalyzes the reversible interconversion of serine and glycine with tetrahydrofolate (THF) serving as the one-carbon carrier. This reaction serves as the major source of one-carbon groups required for the biosynthesis of purines, thymidylate, methionine, and other important biomolecules. Also exhibits THF-independent aldolase activity toward beta-hydroxyamino acids, producing glycine and aldehydes, via a retro-aldol mechanism. This is Serine hydroxymethyltransferase from Hydrogenovibrio crunogenus (strain DSM 25203 / XCL-2) (Thiomicrospira crunogena).